The sequence spans 59 residues: Sec-independent protein translocase protein TatA (59 aa).

Residues 1–21 (MGRLGLTEILVIVGIVILLFG) traverse the membrane as a helical segment.

This sequence belongs to the TatA/E family. As to quaternary structure, forms a complex with TatC.

The protein localises to the cell inner membrane. Part of the twin-arginine translocation (Tat) system that transports large folded proteins containing a characteristic twin-arginine motif in their signal peptide across membranes. TatA could form the protein-conducting channel of the Tat system. The polypeptide is Sec-independent protein translocase protein TatA (Flavobacterium johnsoniae (strain ATCC 17061 / DSM 2064 / JCM 8514 / BCRC 14874 / CCUG 350202 / NBRC 14942 / NCIMB 11054 / UW101) (Cytophaga johnsonae)).